Here is a 365-residue protein sequence, read N- to C-terminus: tRNA N6-adenosine threonylcarbamoyltransferase (365 aa).

Fe cation is bound by residues His-119 and His-123. Substrate is bound by residues 141-145 (LVSGG), Asp-174, Gly-187, and Asn-289. Fe cation is bound at residue Asp-317. Positions 342–365 (ARPRWPLDSKSPAMLGSGKKGAKA) are disordered.

It belongs to the KAE1 / TsaD family. The cofactor is Fe(2+).

It localises to the cytoplasm. It carries out the reaction L-threonylcarbamoyladenylate + adenosine(37) in tRNA = N(6)-L-threonylcarbamoyladenosine(37) in tRNA + AMP + H(+). Functionally, required for the formation of a threonylcarbamoyl group on adenosine at position 37 (t(6)A37) in tRNAs that read codons beginning with adenine. Is involved in the transfer of the threonylcarbamoyl moiety of threonylcarbamoyl-AMP (TC-AMP) to the N6 group of A37, together with TsaE and TsaB. TsaD likely plays a direct catalytic role in this reaction. The sequence is that of tRNA N6-adenosine threonylcarbamoyltransferase from Roseobacter denitrificans (strain ATCC 33942 / OCh 114) (Erythrobacter sp. (strain OCh 114)).